A 730-amino-acid polypeptide reads, in one-letter code: DNA ligase (730 aa).

A disordered region spans residues Met-1–Leu-23. Residues Asp-44–Asp-48, Ser-93–Leu-94, and Glu-124 each bind NAD(+). Lys-126 serves as the catalytic N6-AMP-lysine intermediate. Residues Arg-147, Glu-184, Lys-300, and Lys-324 each coordinate NAD(+). Zn(2+)-binding residues include Cys-418, Cys-421, Cys-437, and Cys-443. Residues Glu-638–Pro-727 enclose the BRCT domain.

The protein belongs to the NAD-dependent DNA ligase family. LigA subfamily. Mg(2+) serves as cofactor. Mn(2+) is required as a cofactor.

It catalyses the reaction NAD(+) + (deoxyribonucleotide)n-3'-hydroxyl + 5'-phospho-(deoxyribonucleotide)m = (deoxyribonucleotide)n+m + AMP + beta-nicotinamide D-nucleotide.. DNA ligase that catalyzes the formation of phosphodiester linkages between 5'-phosphoryl and 3'-hydroxyl groups in double-stranded DNA using NAD as a coenzyme and as the energy source for the reaction. It is essential for DNA replication and repair of damaged DNA. This Streptomyces avermitilis (strain ATCC 31267 / DSM 46492 / JCM 5070 / NBRC 14893 / NCIMB 12804 / NRRL 8165 / MA-4680) protein is DNA ligase.